The chain runs to 571 residues: Phosphatidylinositol-3,5-bisphosphate 3-phosphatase MTMR2 (571 aa).

The GRAM domain maps to Met1–Gly67. Residues Gly133–Tyr508 form the Myotubularin phosphatase domain. Asn258, Asn283, and Ile284 together coordinate a 1,2-diacyl-sn-glycero-3-phospho-(1D-myo-inositol-3,5-bisphosphate). Residues Asn258, Asn283, and Ile284 each coordinate a 1,2-diacyl-sn-glycero-3-phospho-(1D-myo-inositol-3-phosphate). The active-site Phosphocysteine intermediate is the Cys345. The a 1,2-diacyl-sn-glycero-3-phospho-(1D-myo-inositol-3,5-bisphosphate) site is built by Ser346, Asp347, Gly348, Trp349, Asp350, Arg351, Arg387, and Arg391. Residues Ser346, Asp347, Gly348, Trp349, Asp350, and Arg351 each contribute to the a 1,2-diacyl-sn-glycero-3-phospho-(1D-myo-inositol-3-phosphate) site. Residue Arg391 participates in a 1,2-diacyl-sn-glycero-3-phospho-(1D-myo-inositol-3-phosphate) binding. Residues Val521–Ser553 adopt a coiled-coil conformation. A disordered region spans residues Arg544–Val571.

This sequence belongs to the protein-tyrosine phosphatase family. Non-receptor class myotubularin subfamily. As to quaternary structure, homooligomer and heterooligomer.

It localises to the cytoplasm. It is found in the early endosome membrane. The enzyme catalyses a 1,2-diacyl-sn-glycero-3-phospho-(1D-myo-inositol-3,5-bisphosphate) + H2O = a 1,2-diacyl-sn-glycero-3-phospho-(1D-myo-inositol-5-phosphate) + phosphate. It catalyses the reaction a 1,2-diacyl-sn-glycero-3-phospho-(1D-myo-inositol-3-phosphate) + H2O = a 1,2-diacyl-sn-glycero-3-phospho-(1D-myo-inositol) + phosphate. It carries out the reaction 1,2-dioctanoyl-sn-glycero-3-phospho-(1-D-myo-inositol-3-phosphate) + H2O = 1,2-dioctanoyl-sn-glycero-3-phospho-(1D-myo-inositol) + phosphate. The catalysed reaction is 1,2-dioctanoyl-sn-glycero-3-phospho-(1D-myo-inositol-3,5-bisphosphate) + H2O = 1,2-dioctanoyl-sn-glycero-3-phospho-(1D-myo-inositol-5-phosphate) + phosphate. In terms of biological role, lipid phosphatase that specifically dephosphorylates the D-3 position of phosphatidylinositol 3-phosphate and phosphatidylinositol 3,5-bisphosphate, generating phosphatidylinositol and phosphatidylinositol 5-phosphate. Regulates the level of these phosphoinositides critical for various biological processes including autophagy initiation and autophagosome maturation. The chain is Phosphatidylinositol-3,5-bisphosphate 3-phosphatase MTMR2 from Gallus gallus (Chicken).